The primary structure comprises 548 residues: Medium/long-chain-fatty-acid--CoA/3-oxocholest-4-en-26-oate--CoA ligase (548 aa).

ATP-binding positions include 174 to 182 (TGGTTGFPK), Asp415, Arg430, and Lys521. The segment covering 520-541 (GKPDYRWAKEQTEARPADDVHA) has biased composition (basic and acidic residues). The tract at residues 520–548 (GKPDYRWAKEQTEARPADDVHAGHVTSGG) is disordered.

It belongs to the ATP-dependent AMP-binding enzyme family.

The catalysed reaction is a medium-chain fatty acid + ATP + CoA = a medium-chain fatty acyl-CoA + AMP + diphosphate. It catalyses the reaction a long-chain fatty acid + ATP + CoA = a long-chain fatty acyl-CoA + AMP + diphosphate. It carries out the reaction (25S)-3-oxocholest-4-en-26-oate + ATP + CoA = (25S)-3-oxocholest-4-en-26-oyl-CoA + AMP + diphosphate. Its pathway is lipid metabolism; fatty acid biosynthesis. The protein operates within steroid metabolism; cholesterol metabolism. Catalyzes the activation of medium/long-chain fatty acids as acyl-coenzyme A (acyl-CoA), which are then transferred to the multifunctional polyketide synthase (PKS) type III for further chain extension. Also involved in the degradation of cholesterol via the degradation of the side chains of C-24 branched-chain sterols. Catalyzes the ATP-dependent CoA thioesterification of the sterol 3-oxocholest-4-en-26-oate to yield 3-oxocholest-4-en-26-oyl-CoA. The polypeptide is Medium/long-chain-fatty-acid--CoA/3-oxocholest-4-en-26-oate--CoA ligase (Mycobacterium bovis (strain ATCC BAA-935 / AF2122/97)).